Here is a 198-residue protein sequence, read N- to C-terminus: AICSLVLYLLTLMLMEKLSSNTVDAQEVELIWTILPAIVLILLALPSLQILYMMDEIDEPDLTLKAIGHQWYWSYEYTDFKDLSFDSYMIPTPDLPTGYFRLLEVDNRVVIPMESPIRMIITAADVLHSWAVPTLGVKTDAIPGRLNQTSFITTRPGIFYGQCSEICGANHSFMPIVVESTPLPHFESWSSLLSTSSL.

Residues 1–13 (AICSLVLYLLTLM) traverse the membrane as a helical segment. Over 14-26 (LMEKLSSNTVDAQ) the chain is Mitochondrial matrix. The chain crosses the membrane as a helical span at residues 27–54 (EVELIWTILPAIVLILLALPSLQILYMM). Residues 55 to 198 (DEIDEPDLTL…WSSLLSTSSL (144 aa)) are Mitochondrial intermembrane-facing. Residues H128, C163, E165, C167, H171, and M174 each coordinate Cu cation. Residue E165 participates in Mg(2+) binding.

This sequence belongs to the cytochrome c oxidase subunit 2 family. Component of the cytochrome c oxidase (complex IV, CIV), a multisubunit enzyme composed of 14 subunits. The complex is composed of a catalytic core of 3 subunits MT-CO1, MT-CO2 and MT-CO3, encoded in the mitochondrial DNA, and 11 supernumerary subunits COX4I, COX5A, COX5B, COX6A, COX6B, COX6C, COX7A, COX7B, COX7C, COX8 and NDUFA4, which are encoded in the nuclear genome. The complex exists as a monomer or a dimer and forms supercomplexes (SCs) in the inner mitochondrial membrane with NADH-ubiquinone oxidoreductase (complex I, CI) and ubiquinol-cytochrome c oxidoreductase (cytochrome b-c1 complex, complex III, CIII), resulting in different assemblies (supercomplex SCI(1)III(2)IV(1) and megacomplex MCI(2)III(2)IV(2)). Found in a complex with TMEM177, COA6, COX18, COX20, SCO1 and SCO2. Interacts with TMEM177 in a COX20-dependent manner. Interacts with COX20. Interacts with COX16. It depends on Cu cation as a cofactor.

The protein resides in the mitochondrion inner membrane. The enzyme catalyses 4 Fe(II)-[cytochrome c] + O2 + 8 H(+)(in) = 4 Fe(III)-[cytochrome c] + 2 H2O + 4 H(+)(out). Functionally, component of the cytochrome c oxidase, the last enzyme in the mitochondrial electron transport chain which drives oxidative phosphorylation. The respiratory chain contains 3 multisubunit complexes succinate dehydrogenase (complex II, CII), ubiquinol-cytochrome c oxidoreductase (cytochrome b-c1 complex, complex III, CIII) and cytochrome c oxidase (complex IV, CIV), that cooperate to transfer electrons derived from NADH and succinate to molecular oxygen, creating an electrochemical gradient over the inner membrane that drives transmembrane transport and the ATP synthase. Cytochrome c oxidase is the component of the respiratory chain that catalyzes the reduction of oxygen to water. Electrons originating from reduced cytochrome c in the intermembrane space (IMS) are transferred via the dinuclear copper A center (CU(A)) of subunit 2 and heme A of subunit 1 to the active site in subunit 1, a binuclear center (BNC) formed by heme A3 and copper B (CU(B)). The BNC reduces molecular oxygen to 2 water molecules using 4 electrons from cytochrome c in the IMS and 4 protons from the mitochondrial matrix. In Tinamus major (Great tinamou), this protein is Cytochrome c oxidase subunit 2 (MT-CO2).